Reading from the N-terminus, the 301-residue chain is Probable 5-dehydro-4-deoxyglucarate dehydratase (301 aa).

It belongs to the DapA family.

It catalyses the reaction 5-dehydro-4-deoxy-D-glucarate + H(+) = 2,5-dioxopentanoate + CO2 + H2O. The protein operates within carbohydrate acid metabolism; D-glucarate degradation; 2,5-dioxopentanoate from D-glucarate: step 2/2. The chain is Probable 5-dehydro-4-deoxyglucarate dehydratase from Cereibacter sphaeroides (strain KD131 / KCTC 12085) (Rhodobacter sphaeroides).